We begin with the raw amino-acid sequence, 444 residues long: UPF0761 membrane protein RC1_0578 (444 aa).

6 consecutive transmembrane segments (helical) span residues 49–69 (LLAL…FPAY), 103–123 (AAAL…LLFF), 145–165 (LLSF…SLSV), 186–206 (FMLP…MIPN), 219–239 (IAAA…IAAF), and 248–268 (ALSV…VVLF). The interval 423 to 444 (SGQPSGQVETAVRQRTGLQGRI) is disordered.

It belongs to the UPF0761 family.

The protein localises to the cell inner membrane. The sequence is that of UPF0761 membrane protein RC1_0578 from Rhodospirillum centenum (strain ATCC 51521 / SW).